The chain runs to 427 residues: UDP-N-acetylglucosamine 1-carboxyvinyltransferase 2 (427 aa).

19–20 lines the phosphoenolpyruvate pocket; it reads KN. Position 91 (arginine 91) interacts with UDP-N-acetyl-alpha-D-glucosamine. The active-site Proton donor is cysteine 115. Cysteine 115 is modified (2-(S-cysteinyl)pyruvic acid O-phosphothioketal). The UDP-N-acetyl-alpha-D-glucosamine site is built by aspartate 307 and valine 329.

It belongs to the EPSP synthase family. MurA subfamily.

The protein localises to the cytoplasm. The catalysed reaction is phosphoenolpyruvate + UDP-N-acetyl-alpha-D-glucosamine = UDP-N-acetyl-3-O-(1-carboxyvinyl)-alpha-D-glucosamine + phosphate. The protein operates within cell wall biogenesis; peptidoglycan biosynthesis. Its function is as follows. Cell wall formation. Adds enolpyruvyl to UDP-N-acetylglucosamine. This Prochlorococcus marinus (strain SARG / CCMP1375 / SS120) protein is UDP-N-acetylglucosamine 1-carboxyvinyltransferase 2.